A 571-amino-acid polypeptide reads, in one-letter code: MQPRHIAELILTGFKKHYLLFQKTTAKAPLAFAKRDWQAINDISRLRISHYDDRVNETTATLRQQQTEQLDEQLWLEVKKLYQHFLCFHPQAELAETFYNSVFCRLYHRRYFHNDFIFVEATLKDAPAVPVEAEYRSYFPVVDGLKPTIKQIINHFDFKAPFVNLERDIRLLVKAFYKQAPDTHHKAWQMRFDILHTPFYRNKAAYIVGRVVSQSGVQPFIIAVLHHEDKGLYLDALLTKSSQMRVIFGFARAYFMVETHAPCALVRFLNQLMPNKTIAELYNAIGFHKQGKTEFYREFLNHLTHSNDEFTIAPGTPGMVMMVFTLPSFGYVFKVIKDKFGESKPFGRDTVLKRYQLVKKHDRVGRMADTIEYSNVVFPLARFDSNLLQQLHQTIGSSMVIEGDWLIIKHLYIERRMTPLNLFLENADDASAADAIEEYGQALKEMIAVNIFPGDMLLKNFGVSKHKRIIFYDYDEVQYLTDMNFRALPKAKTYDDYLMDEQSYSVAPQDVFPEQLCTFVMPNPIYKQFLMSTHPELIDVNFWKQAQQNIKNGQVSHIYPYPTAQRFIHHW.

Residues 313 to 319 and Lys-334 each bind ATP; that span reads APGTPGM. Asp-369 is a catalytic residue.

It belongs to the AceK family.

Its subcellular location is the cytoplasm. It catalyses the reaction L-seryl-[isocitrate dehydrogenase] + ATP = O-phospho-L-seryl-[isocitrate dehydrogenase] + ADP + H(+). Bifunctional enzyme which can phosphorylate or dephosphorylate isocitrate dehydrogenase (IDH) on a specific serine residue. This is a regulatory mechanism which enables bacteria to bypass the Krebs cycle via the glyoxylate shunt in response to the source of carbon. When bacteria are grown on glucose, IDH is fully active and unphosphorylated, but when grown on acetate or ethanol, the activity of IDH declines drastically concomitant with its phosphorylation. In Pseudoalteromonas translucida (strain TAC 125), this protein is Isocitrate dehydrogenase kinase/phosphatase 2.